A 124-amino-acid chain; its full sequence is MNKVKCYVLFTALLSSLCAYGAPQSITELCSEYRNTQIYTINDKILSYTESMAGKREMVIITFKSGATFQVEVPGSQHIDSQKKAIERMKDTLRITYLTETKIDKLCVWNNKTPNSIAAISMEN.

The signal sequence occupies residues 1–21; sequence MNKVKCYVLFTALLSSLCAYG. The cysteines at positions 30 and 107 are disulfide-linked.

In terms of assembly, heterohexamer of one A chain and of five B chains.

The biological activity of the toxin is produced by the A chain, which activates intracellular adenyl cyclase. In Escherichia coli O78:H11 (strain H10407 / ETEC), this protein is Heat-labile enterotoxin B chain (eltB).